A 245-amino-acid polypeptide reads, in one-letter code: Phosducin (245 aa).

The disordered stretch occupies residues 1–70 (MEKAKSQSLE…DKDSKERFSR (70 aa)). Residues 1-244 (MEKAKSQSLE…LEQTNMEEDM (244 aa)) form the Phosducin domain. 2 stretches are compositionally biased toward basic and acidic residues: residues 28 to 50 (DWRKFKLESEDSDSVAHSKKEIL) and 58 to 69 (SRDDKDSKERFS). S73 bears the Phosphoserine; by PKA mark. Residues 111 to 245 (YGFVYELESG…EQTNMEEDME (135 aa)) form a thioredoxin fold region.

Belongs to the phosducin family. In terms of assembly, interacts with CRX. Forms a complex with the beta and gamma subunits of the GTP-binding protein, transducin. In terms of processing, light-induced changes in cyclic nucleotide levels modulate the phosphorylation of this protein by cAMP kinase.

It is found in the cytoplasm. It localises to the cytosol. Its subcellular location is the nucleus. The protein resides in the cell projection. The protein localises to the cilium. It is found in the photoreceptor outer segment. It localises to the photoreceptor inner segment. Functionally, inhibits the transcriptional activation activity of the cone-rod homeobox CRX. May participate in the regulation of visual phototransduction or in the integration of photoreceptor metabolism. The sequence is that of Phosducin (PDC) from Bos taurus (Bovine).